A 483-amino-acid polypeptide reads, in one-letter code: UDP-N-acetylmuramyl-tripeptide synthetase (483 aa).

Serine 43 is a UDP-N-acetyl-alpha-D-muramoyl-L-alanyl-D-glutamate binding site. Residue 116-122 participates in ATP binding; that stretch reads GTKGKTT. UDP-N-acetyl-alpha-D-muramoyl-L-alanyl-D-glutamate-binding positions include 160–161, serine 187, and arginine 195; that span reads TT. An N6-carboxylysine modification is found at lysine 229.

It belongs to the MurCDEF family. MurE subfamily. Post-translationally, carboxylation is probably crucial for Mg(2+) binding and, consequently, for the gamma-phosphate positioning of ATP.

The protein resides in the cytoplasm. The protein operates within cell wall biogenesis; peptidoglycan biosynthesis. Catalyzes the addition of an amino acid to the nucleotide precursor UDP-N-acetylmuramoyl-L-alanyl-D-glutamate (UMAG) in the biosynthesis of bacterial cell-wall peptidoglycan. This is UDP-N-acetylmuramyl-tripeptide synthetase from Lactococcus lactis subsp. cremoris (strain MG1363).